A 448-amino-acid polypeptide reads, in one-letter code: Probable glycine dehydrogenase (decarboxylating) subunit 1 (448 aa).

Belongs to the GcvP family. N-terminal subunit subfamily. The glycine cleavage system is composed of four proteins: P, T, L and H. In this organism, the P 'protein' is a heterodimer of two subunits.

It catalyses the reaction N(6)-[(R)-lipoyl]-L-lysyl-[glycine-cleavage complex H protein] + glycine + H(+) = N(6)-[(R)-S(8)-aminomethyldihydrolipoyl]-L-lysyl-[glycine-cleavage complex H protein] + CO2. Its function is as follows. The glycine cleavage system catalyzes the degradation of glycine. The P protein binds the alpha-amino group of glycine through its pyridoxal phosphate cofactor; CO(2) is released and the remaining methylamine moiety is then transferred to the lipoamide cofactor of the H protein. The chain is Probable glycine dehydrogenase (decarboxylating) subunit 1 from Bacillus licheniformis (strain ATCC 14580 / DSM 13 / JCM 2505 / CCUG 7422 / NBRC 12200 / NCIMB 9375 / NCTC 10341 / NRRL NRS-1264 / Gibson 46).